The primary structure comprises 89 residues: UPF0367 protein CYA_1023 (89 aa).

Residues 69–89 (TKSGGPGAPGTRPGFLAQLQG) form a disordered region.

It belongs to the UPF0367 family.

The protein is UPF0367 protein CYA_1023 of Synechococcus sp. (strain JA-3-3Ab) (Cyanobacteria bacterium Yellowstone A-Prime).